We begin with the raw amino-acid sequence, 273 residues long: MEAVSPIRRFTVDGVNVYYEHYQNPGRQTLVCVHGFLSSAFSFRKVIPLLRDKYDIIALDLPPFGQSEKSRTFIYTYQNLAKLVIGILEHLQVKQAVLVGHSMGGQISLSAALQKPELFSKVVLLCSSGYLKRSHPTIIFGTHIPYFHLYIKRWLSKEGVMKNLLNVVHDKSLIDEEMIDGYGRPFQDEQIFKAMTRFIRHREGDLEPEQLKKMNKPALLIWGEEDRIVPMEIGKRLHADLPNSVLYSLGQTGHLVPEERPELISEHIADFIK.

An AB hydrolase-1 domain is found at 29 to 131 (TLVCVHGFLS…VVLLCSSGYL (103 aa)). Catalysis depends on residues serine 102 and histidine 254.

Belongs to the DmpD/TodF/XylF esterase family.

This is an uncharacterized protein from Bacillus subtilis (strain 168).